Consider the following 72-residue polypeptide: Translation initiation factor IF-1 (72 aa).

The region spanning 1 to 72 (MAKADVIEVE…TKGRITFRFK (72 aa)) is the S1-like domain.

The protein belongs to the IF-1 family. Component of the 30S ribosomal translation pre-initiation complex which assembles on the 30S ribosome in the order IF-2 and IF-3, IF-1 and N-formylmethionyl-tRNA(fMet); mRNA recruitment can occur at any time during PIC assembly.

The protein resides in the cytoplasm. Its function is as follows. One of the essential components for the initiation of protein synthesis. Stabilizes the binding of IF-2 and IF-3 on the 30S subunit to which N-formylmethionyl-tRNA(fMet) subsequently binds. Helps modulate mRNA selection, yielding the 30S pre-initiation complex (PIC). Upon addition of the 50S ribosomal subunit IF-1, IF-2 and IF-3 are released leaving the mature 70S translation initiation complex. The protein is Translation initiation factor IF-1 of Limosilactobacillus reuteri (strain DSM 20016) (Lactobacillus reuteri).